The primary structure comprises 136 residues: Keratin-associated protein 4-2 (136 aa).

20 consecutive repeat copies span residues 5–9, 20–24, 25–29, 30–34, 35–39, 40–44, 45–49, 50–54, 55–59, 60–64, 65–69, 70–74, 75–79, 80–84, 90–94, 95–99, 100–104, 110–114, 120–124, and 125–129. Residues 5-129 are 20 X 5 AA repeats OF C-C-[GRQVS]-[SPT]-[VSTQ]; that stretch reads CCGSVCSDQG…CCVSTCCRPT (125 aa).

It belongs to the KRTAP type 4 family. Interacts with hair keratins.

In the hair cortex, hair keratin intermediate filaments are embedded in an interfilamentous matrix, consisting of hair keratin-associated proteins (KRTAP), which are essential for the formation of a rigid and resistant hair shaft through their extensive disulfide bond cross-linking with abundant cysteine residues of hair keratins. The matrix proteins include the high-sulfur and high-glycine-tyrosine keratins. The sequence is that of Keratin-associated protein 4-2 (KRTAP4-2) from Homo sapiens (Human).